The following is a 98-amino-acid chain: NADH-ubiquinone oxidoreductase chain 4L (98 aa).

Helical transmembrane passes span 1–21 (MSMV…GLLM), 29–49 (SLLC…VTIL), and 61–81 (IILL…LVMV).

The protein belongs to the complex I subunit 4L family. Core subunit of respiratory chain NADH dehydrogenase (Complex I) which is composed of 45 different subunits.

It localises to the mitochondrion inner membrane. The enzyme catalyses a ubiquinone + NADH + 5 H(+)(in) = a ubiquinol + NAD(+) + 4 H(+)(out). Functionally, core subunit of the mitochondrial membrane respiratory chain NADH dehydrogenase (Complex I) which catalyzes electron transfer from NADH through the respiratory chain, using ubiquinone as an electron acceptor. Part of the enzyme membrane arm which is embedded in the lipid bilayer and involved in proton translocation. The polypeptide is NADH-ubiquinone oxidoreductase chain 4L (MT-ND4L) (Halichoerus grypus (Gray seal)).